Reading from the N-terminus, the 201-residue chain is TATA-box-binding protein 2 (201 aa).

2 consecutive repeat copies span residues 26 to 102 and 116 to 193.

The protein belongs to the TBP family. Belongs to the TFIID complex together with the TBP-associated factors (TAFs). Binds DNA as monomer.

The protein localises to the nucleus. Functionally, general transcription factor that functions at the core of the DNA-binding multiprotein factor TFIID. Binding of TFIID to the TATA box is the initial transcriptional step of the pre-initiation complex (PIC), playing a role in the activation of eukaryotic genes transcribed by RNA polymerase II. The protein is TATA-box-binding protein 2 (TBP2) of Triticum aestivum (Wheat).